Consider the following 420-residue polypeptide: Small ribosomal subunit protein mS75 (420 aa).

The transit peptide at 1–11 directs the protein to the mitochondrion; the sequence is MYNLSRIIYRF. Disordered regions lie at residues 99–120 and 390–420; these read RQKNAANPSSDNTPSDSGDVMS and RYSPANQKRRSKRKQKRKERRIACLKAGKQT. Over residues 102–114 the composition is skewed to polar residues; sequence NAANPSSDNTPSD. The span at 396-409 shows a compositional bias: basic residues; it reads QKRRSKRKQKRKER.

As to quaternary structure, component of the mitochondrial ribosome small subunit. As to expression, expressed at high levels in reproductive organs and, at lower levels, ubiquitously.

It is found in the mitochondrion. Essential for fertility (male and female gametophyte functions and development). Required for the integrity of female gametic mitochondria. Modulates male gametophyte functions, including pollen tube growth and style penetration. Involved in mitochondrial-driven cell-to-cell communication in embryo sacs during female gametes maturation (including embryogenesis initiation and endosperm development), especially for reciprocal signaling between central and egg cells which regulates reciprocal development. The sequence is that of Small ribosomal subunit protein mS75 from Arabidopsis thaliana (Mouse-ear cress).